The following is a 467-amino-acid chain: Glutamyl-tRNA(Gln) amidotransferase subunit A (467 aa).

Catalysis depends on charge relay system residues Lys-57 and Ser-132. Ser-156 serves as the catalytic Acyl-ester intermediate.

The protein belongs to the amidase family. GatA subfamily. In terms of assembly, heterotrimer of A, B and C subunits.

It catalyses the reaction L-glutamyl-tRNA(Gln) + L-glutamine + ATP + H2O = L-glutaminyl-tRNA(Gln) + L-glutamate + ADP + phosphate + H(+). In terms of biological role, allows the formation of correctly charged Gln-tRNA(Gln) through the transamidation of misacylated Glu-tRNA(Gln) in organisms which lack glutaminyl-tRNA synthetase. The reaction takes place in the presence of glutamine and ATP through an activated gamma-phospho-Glu-tRNA(Gln). The polypeptide is Glutamyl-tRNA(Gln) amidotransferase subunit A (Pseudothermotoga lettingae (strain ATCC BAA-301 / DSM 14385 / NBRC 107922 / TMO) (Thermotoga lettingae)).